The sequence spans 109 residues: Nucleoid-associated protein HAPS_1040 (109 aa).

The segment at 1–21 is disordered; it reads MFGKGGLGGLMKQAQQMQERM. A compositionally biased stretch (low complexity) spans 10–19; that stretch reads LMKQAQQMQE.

It belongs to the YbaB/EbfC family. Homodimer.

It is found in the cytoplasm. The protein resides in the nucleoid. In terms of biological role, binds to DNA and alters its conformation. May be involved in regulation of gene expression, nucleoid organization and DNA protection. The sequence is that of Nucleoid-associated protein HAPS_1040 from Glaesserella parasuis serovar 5 (strain SH0165) (Haemophilus parasuis).